The sequence spans 96 residues: Defensin-like protein 151 (96 aa).

Residues 1–29 (MKKPSQLSATILTIFVILAIGVMVKETLG) form the signal peptide. Cystine bridges form between C35–C88, C48–C68, C53–C82, and C57–C84.

The protein belongs to the DEFL family.

It is found in the secreted. The sequence is that of Defensin-like protein 151 (LCR17) from Arabidopsis thaliana (Mouse-ear cress).